Consider the following 1020-residue polypeptide: Mastermind-like protein 1 (1020 aa).

Residues 1-97 (MVLPTCPMAE…PAPASAPAAA (97 aa)) form a required for interaction with NOTCH proteins region. Phosphoserine is present on S45. A compositionally biased stretch (basic residues) spans 67–76 (KAKRAGKHRQ). The interval 67–191 (KAKRAGKHRQ…TAGKHSLGLD (125 aa)) is disordered. Low complexity predominate over residues 77 to 99 (PPAAATAPVAAPAPASAPAAARL). Residues 100–122 (DAADGPEHGRPVAHLHDTVKRSL) show a composition bias toward basic and acidic residues. Over residues 124-133 (SAASPQNGDQ) the composition is skewed to polar residues. Phosphoserine is present on residues S127, S310, S321, and S367. 6 disordered regions span residues 335–522 (GASS…YGNT), 575–598 (PFRS…APAA), 663–686 (EKQQ…QSTF), 725–748 (SMGP…RGVA), 794–866 (QNAS…NPFT), and 888–959 (AMPS…RPGL). The span at 344–369 (DSPSLGSSQTLFHTTSQPGVDNSSPN) shows a compositional bias: polar residues. Residues 373–383 (ASAQAQSAQRA) are compositionally biased toward low complexity. Polar residues predominate over residues 399 to 410 (ELSSAHQLQQIA). Over residues 419–435 (LQNPQQAAPAPGPGQLA) the composition is skewed to low complexity. Polar residues predominate over residues 491-515 (PSHSNLLSHQSPSNLNQNPVNNQGS). A compositionally biased stretch (low complexity) spans 588-598 (PSSVPVAAPAA). The segment covering 794 to 818 (QNASTSAAYGQNSLGSASLSQQHSK) has biased composition (polar residues). K827 carries the post-translational modification N6-acetyllysine. Positions 837 to 864 (MGSQNASWQHQGMPNLSSQTSGNSSVNP) are enriched in polar residues. Residues 911-920 (SAQQRNSAPA) are compositionally biased toward low complexity. A Phosphoserine modification is found at S1019.

Belongs to the mastermind family. In terms of assembly, interacts (via N-terminus) with NOTCH1, NOTCH2, NOTCH3 and NOTCH4 (via ankyrin repeat region). Interacts (via N-terminus) with p53 (via DNA-binding region). Forms a DNA-binding complex with Notch proteins and RBPSUH/RBP-J kappa/CBF1. Also binds CREBBP/CBP and CDK8. Forms a complex with PRAG1, NOTCH1 and MAML1, in a MAML1-dependent manner. At E9.5, strongly expressed in the telencephalon, first branchial arch, forelimb buds and somites. By 10.5 dpc, continuously expressed in brain and spinal cord. Also expressed in first and second branchial arches and limb buds. By 11.5 dpc, expression in CNS is weak but increases in mesodermal tissues. At 14.5 dpc, detected in epithelial cells in trachea, esophagus and proximal and distal tubules of the developing lungs.

It is found in the nucleus speckle. Acts as a transcriptional coactivator for NOTCH proteins. Has been shown to amplify NOTCH-induced transcription of HES1. Enhances phosphorylation and proteolytic turnover of the NOTCH intracellular domain in the nucleus through interaction with CDK8. Binds to CREBBP/CBP which promotes nucleosome acetylation at NOTCH enhancers and activates transcription. Induces phosphorylation and localization of CREBBP to nuclear foci. Plays a role in hematopoietic development by regulating NOTCH-mediated lymphoid cell fate decisions. In Mus musculus (Mouse), this protein is Mastermind-like protein 1.